The chain runs to 94 residues: UPF0768 protein YBL029C-A (94 aa).

Belongs to the UPF0768 family.

Its subcellular location is the cell membrane. The sequence is that of UPF0768 protein YBL029C-A from Saccharomyces cerevisiae (strain ATCC 204508 / S288c) (Baker's yeast).